A 1357-amino-acid polypeptide reads, in one-letter code: DNA-directed RNA polymerase subunit beta (1357 aa).

Belongs to the RNA polymerase beta chain family. The RNAP catalytic core consists of 2 alpha, 1 beta, 1 beta' and 1 omega subunit. When a sigma factor is associated with the core the holoenzyme is formed, which can initiate transcription.

It catalyses the reaction RNA(n) + a ribonucleoside 5'-triphosphate = RNA(n+1) + diphosphate. DNA-dependent RNA polymerase catalyzes the transcription of DNA into RNA using the four ribonucleoside triphosphates as substrates. In Pseudomonas paraeruginosa (strain DSM 24068 / PA7) (Pseudomonas aeruginosa (strain PA7)), this protein is DNA-directed RNA polymerase subunit beta.